The chain runs to 502 residues: Mannitol 2-dehydrogenase (502 aa).

37–48 (IVHIGVGGFHRA) provides a ligand contact to NAD(+).

It belongs to the mannitol dehydrogenase family. As to quaternary structure, monomer.

The enzyme catalyses D-mannitol + NAD(+) = D-fructose + NADH + H(+). In terms of biological role, catalyzes the NAD(H)-dependent interconversion of D-fructose and D-mannitol in the mannitol metabolic pathway. In Aspergillus clavatus (strain ATCC 1007 / CBS 513.65 / DSM 816 / NCTC 3887 / NRRL 1 / QM 1276 / 107), this protein is Mannitol 2-dehydrogenase.